A 66-amino-acid chain; its full sequence is Protein translocase subunit SecE (66 aa).

Residues 29 to 49 (LIASTLVVVAAVFIFSLICLV) traverse the membrane as a helical segment.

The protein belongs to the SecE/SEC61-gamma family. In terms of assembly, component of the Sec protein translocase complex. Heterotrimer consisting of SecY, SecE and SecG subunits. The heterotrimers can form oligomers, although 1 heterotrimer is thought to be able to translocate proteins. Interacts with the ribosome. Interacts with SecDF, and other proteins may be involved. Interacts with SecA.

Its subcellular location is the cell inner membrane. In terms of biological role, essential subunit of the Sec protein translocation channel SecYEG. Clamps together the 2 halves of SecY. May contact the channel plug during translocation. The chain is Protein translocase subunit SecE from Rickettsia typhi (strain ATCC VR-144 / Wilmington).